The sequence spans 275 residues: Myb/SANT-like DNA-binding domain-containing protein 3 (275 aa).

Residues 13-78 (FSELEKSILL…QLKKCWENIK (66 aa)) form the Myb-like domain. Residues Ser-96 and Ser-98 each carry the phosphoserine modification. A Glycyl lysine isopeptide (Lys-Gly) (interchain with G-Cter in SUMO2) cross-link involves residue Lys-154. The stretch at 211 to 247 (QLIQMNEVHVAKIQQIERECEMAEEEHRIKMEVLNKK) forms a coiled coil. Residue Ser-274 is modified to Phosphoserine.

Belongs to the MSANTD3 family. Expressed in brain.

This is Myb/SANT-like DNA-binding domain-containing protein 3 (MSANTD3) from Homo sapiens (Human).